The chain runs to 318 residues: Tyrosine--tRNA ligase (318 aa).

Y35 is an L-tyrosine binding site. Residues 40 to 48 (PSGKVHLGH) carry the 'HIGH' region motif. L-tyrosine is bound by residues Y154, Q158, D161, and Q176. A 'KMSKS' region motif is present at residues 211–215 (KMSSS). S214 provides a ligand contact to ATP.

The protein belongs to the class-I aminoacyl-tRNA synthetase family. TyrS type 3 subfamily. As to quaternary structure, homodimer.

It is found in the cytoplasm. The enzyme catalyses tRNA(Tyr) + L-tyrosine + ATP = L-tyrosyl-tRNA(Tyr) + AMP + diphosphate + H(+). Functionally, catalyzes the attachment of tyrosine to tRNA(Tyr) in a two-step reaction: tyrosine is first activated by ATP to form Tyr-AMP and then transferred to the acceptor end of tRNA(Tyr). The polypeptide is Tyrosine--tRNA ligase (Methanosphaera stadtmanae (strain ATCC 43021 / DSM 3091 / JCM 11832 / MCB-3)).